A 349-amino-acid chain; its full sequence is Anthranilate phosphoribosyltransferase (349 aa).

5-phospho-alpha-D-ribose 1-diphosphate contacts are provided by residues Gly-82, 85–86 (GD), 92–95 (NVST), 110–118 (KHGNRAVSG), and Ser-122. Gly-82 is a binding site for anthranilate. Residue Ser-94 participates in Mg(2+) binding. An anthranilate-binding site is contributed by Asn-113. Arg-168 is a binding site for anthranilate. Mg(2+)-binding residues include Asp-227 and Glu-228.

The protein belongs to the anthranilate phosphoribosyltransferase family. Homodimer. Mg(2+) serves as cofactor.

The enzyme catalyses N-(5-phospho-beta-D-ribosyl)anthranilate + diphosphate = 5-phospho-alpha-D-ribose 1-diphosphate + anthranilate. It functions in the pathway amino-acid biosynthesis; L-tryptophan biosynthesis; L-tryptophan from chorismate: step 2/5. Its function is as follows. Catalyzes the transfer of the phosphoribosyl group of 5-phosphorylribose-1-pyrophosphate (PRPP) to anthranilate to yield N-(5'-phosphoribosyl)-anthranilate (PRA). The polypeptide is Anthranilate phosphoribosyltransferase (Pseudomonas fluorescens (strain SBW25)).